The following is a 555-amino-acid chain: Serine/threonine-protein kinase Nek4 (555 aa).

A Protein kinase domain is found at 4-258 (YEVLEQIGKG…ANELLNHPHL (255 aa)). ATP contacts are provided by residues 10-18 (IGKGSFGSA) and lysine 33. Residue aspartate 129 is the Proton acceptor of the active site. Disordered stretches follow at residues 288 to 328 (LKER…MFNG), 346 to 372 (QRQE…KAST), and 443 to 477 (NRET…ITKD). Residues 304-320 (PSVSDTEAGSVSSSGKA) show a composition bias toward polar residues.

Belongs to the protein kinase superfamily. NEK Ser/Thr protein kinase family. NIMA subfamily.

The catalysed reaction is L-seryl-[protein] + ATP = O-phospho-L-seryl-[protein] + ADP + H(+). The enzyme catalyses L-threonyl-[protein] + ATP = O-phospho-L-threonyl-[protein] + ADP + H(+). May be involved in plant development processes. The sequence is that of Serine/threonine-protein kinase Nek4 (NEK4) from Arabidopsis thaliana (Mouse-ear cress).